The following is a 279-amino-acid chain: Acyl-coenzyme A thioesterase MBLAC2 (279 aa).

Ser-2 carries the N-acetylserine modification. His-83, His-85, Asp-87, His-88, His-170, Asp-189, and His-231 together coordinate Zn(2+). Cys-254 carries S-palmitoyl cysteine lipidation.

The protein belongs to the metallo-beta-lactamase superfamily. Glyoxalase II family. Zn(2+) is required as a cofactor. Palmitoylated on Cys-254 by ZDHHC20.

The protein resides in the endoplasmic reticulum membrane. The protein localises to the cell membrane. The catalysed reaction is hexadecanoyl-CoA + H2O = hexadecanoate + CoA + H(+). The enzyme catalyses dodecanoyl-CoA + H2O = dodecanoate + CoA + H(+). It catalyses the reaction tetradecanoyl-CoA + H2O = tetradecanoate + CoA + H(+). It carries out the reaction octadecanoyl-CoA + H2O = octadecanoate + CoA + H(+). The catalysed reaction is a beta-lactam + H2O = a substituted beta-amino acid. Functionally, acyl-CoA thioesterases are a group of enzymes that catalyze the hydrolysis of acyl-CoAs to the free fatty acid and coenzyme A (CoASH), providing the potential to regulate intracellular levels of acyl-CoAs, free fatty acids and CoASH. Has an acyl-CoA thioesterase activity towards the long chain fatty acyl-CoA thioester palmitoyl-CoA (hexadecanoyl-CoA; C16:0-CoA). Displays a substrate preference for fatty acyl-CoAs with chain-lengths C12-C18. The polypeptide is Acyl-coenzyme A thioesterase MBLAC2 (MBLAC2) (Bos taurus (Bovine)).